The chain runs to 334 residues: GTPase Obg (334 aa).

An Obg domain is found at 1–159 (MRFVDEVVIK…KEVRLELNLL (159 aa)). Residues 160–331 (ADIALLGLPN…LAKKLNEFLH (172 aa)) enclose the OBG-type G domain. GTP contacts are provided by residues 166-173 (GLPNAGKS), 191-195 (FTTMY), 212-215 (DIPG), 282-285 (NKID), and 312-314 (SAA). S173 and T193 together coordinate Mg(2+).

This sequence belongs to the TRAFAC class OBG-HflX-like GTPase superfamily. OBG GTPase family. Monomer. It depends on Mg(2+) as a cofactor.

The protein resides in the cytoplasm. Its function is as follows. An essential GTPase which binds GTP, GDP and possibly (p)ppGpp with moderate affinity, with high nucleotide exchange rates and a fairly low GTP hydrolysis rate. Plays a role in control of the cell cycle, stress response, ribosome biogenesis and in those bacteria that undergo differentiation, in morphogenesis control. The protein is GTPase Obg of Francisella philomiragia subsp. philomiragia (strain ATCC 25017 / CCUG 19701 / FSC 153 / O#319-036).